A 69-amino-acid polypeptide reads, in one-letter code: UPF0150 protein AF_1072 (69 aa).

It belongs to the UPF0150 family.

The protein is UPF0150 protein AF_1072 of Archaeoglobus fulgidus (strain ATCC 49558 / DSM 4304 / JCM 9628 / NBRC 100126 / VC-16).